Consider the following 157-residue polypeptide: Transcription elongation factor GreB (157 aa).

Belongs to the GreA/GreB family. GreB subfamily.

Necessary for efficient RNA polymerase transcription elongation past template-encoded arresting sites. The arresting sites in DNA have the property of trapping a certain fraction of elongating RNA polymerases that pass through, resulting in locked ternary complexes. Cleavage of the nascent transcript by cleavage factors such as GreA or GreB allows the resumption of elongation from the new 3'terminus. GreB releases sequences of up to 9 nucleotides in length. The polypeptide is Transcription elongation factor GreB (Salmonella typhimurium (strain LT2 / SGSC1412 / ATCC 700720)).